We begin with the raw amino-acid sequence, 200 residues long: Recombination protein RecR (200 aa).

A C4-type zinc finger spans residues 58 to 75; the sequence is CSNCFCLKISQTSPCNFC. Residues 82–177 form the Toprim domain; it reads SSLCIVATPK…KISRLALGMP (96 aa).

Belongs to the RecR family.

May play a role in DNA repair. It seems to be involved in an RecBC-independent recombinational process of DNA repair. It may act with RecF and RecO. In Chlamydia trachomatis serovar D (strain ATCC VR-885 / DSM 19411 / UW-3/Cx), this protein is Recombination protein RecR.